The chain runs to 251 residues: Cell division protein ZapD (251 aa).

This sequence belongs to the ZapD family. Interacts with FtsZ.

It localises to the cytoplasm. In terms of biological role, cell division factor that enhances FtsZ-ring assembly. Directly interacts with FtsZ and promotes bundling of FtsZ protofilaments, with a reduction in FtsZ GTPase activity. The sequence is that of Cell division protein ZapD from Nitrosomonas eutropha (strain DSM 101675 / C91 / Nm57).